Reading from the N-terminus, the 270-residue chain is Oxidized low-density lipoprotein receptor 1 (270 aa).

Positions 1-14 are enriched in basic and acidic residues; it reads MTVDDPKGMKDQLD. The disordered stretch occupies residues 1–22; the sequence is MTVDDPKGMKDQLDQKPNGKTA. The Cytoplasmic segment spans residues 1 to 33; the sequence is MTVDDPKGMKDQLDQKPNGKTAKGFVSSWRWYP. Residues 34–56 form a helical; Signal-anchor for type II membrane protein membrane-spanning segment; the sequence is AAVTLGVLCLGLLVTVILLILQL. The S-palmitoyl cysteine moiety is linked to residue Cys-42. Residues 57-146 form a neck region; sequence SQVSDLIKKQ…SGPCPQDWLW (90 aa). Over 57 to 270 the chain is Extracellular; the sequence is SQVSDLIKKQ…QKKANLLRAQ (214 aa). N-linked (GlcNAc...) asparagine glycosylation is found at Asn-69 and Asn-135. The stretch at 85-135 forms a coiled coil; the sequence is RRSEKSAQESQKELKEMIETLAHKLDEKSKKLMELHRQNLNLQEVLKEAAN. Cystine bridges form between Cys-140/Cys-151, Cys-168/Cys-260, and Cys-239/Cys-252. A C-type lectin domain is found at 147 to 261; that stretch reads HEENCYQFSS…CILTAFSICQ (115 aa).

As to quaternary structure, homodimer; disulfide-linked. May form a hexamer composed of 3 homodimers. Interacts with HSP70. In terms of processing, N-glycosylated. As to expression, highly expressed in endothelial cells, aortic intima and lung. Expressed at low level in other tissues.

Its subcellular location is the cell membrane. It is found in the membrane raft. It localises to the secreted. Its function is as follows. Receptor that mediates the recognition, internalization and degradation of oxidatively modified low density lipoprotein (oxLDL) by vascular endothelial cells. OxLDL is a marker of atherosclerosis that induces vascular endothelial cell activation and dysfunction, resulting in pro-inflammatory responses, pro-oxidative conditions and apoptosis. Its association with oxLDL induces the activation of NF-kappa-B through an increased production of intracellular reactive oxygen and a variety of pro-atherogenic cellular responses including a reduction of nitric oxide (NO) release, monocyte adhesion and apoptosis. In addition to binding oxLDL, it acts as a receptor for the HSP70 protein involved in antigen cross-presentation to naive T-cells in dendritic cells, thereby participating in cell-mediated antigen cross-presentation. Also involved in inflammatory process, by acting as a leukocyte-adhesion molecule at the vascular interface in endotoxin-induced inflammation. Also acts as a receptor for advanced glycation end (AGE) products, activated platelets, monocytes, apoptotic cells and both Gram-negative and Gram-positive bacteria. This is Oxidized low-density lipoprotein receptor 1 (OLR1) from Bos taurus (Bovine).